The sequence spans 918 residues: DNA mismatch repair protein MutS (918 aa).

Residue 662-669 (GPNMAGKS) coordinates ATP.

This sequence belongs to the DNA mismatch repair MutS family.

This protein is involved in the repair of mismatches in DNA. It is possible that it carries out the mismatch recognition step. This protein has a weak ATPase activity. This Sorangium cellulosum (strain So ce56) (Polyangium cellulosum (strain So ce56)) protein is DNA mismatch repair protein MutS.